We begin with the raw amino-acid sequence, 488 residues long: Protein nucleotidyltransferase YdiU (488 aa).

ATP contacts are provided by G91, G93, R94, K114, D126, G127, R177, and R184. D253 (proton acceptor) is an active-site residue. Mg(2+) contacts are provided by N254 and D263. D263 contributes to the ATP binding site.

This sequence belongs to the SELO family. The cofactor is Mg(2+). Mn(2+) serves as cofactor.

It carries out the reaction L-seryl-[protein] + ATP = 3-O-(5'-adenylyl)-L-seryl-[protein] + diphosphate. The enzyme catalyses L-threonyl-[protein] + ATP = 3-O-(5'-adenylyl)-L-threonyl-[protein] + diphosphate. The catalysed reaction is L-tyrosyl-[protein] + ATP = O-(5'-adenylyl)-L-tyrosyl-[protein] + diphosphate. It catalyses the reaction L-histidyl-[protein] + UTP = N(tele)-(5'-uridylyl)-L-histidyl-[protein] + diphosphate. It carries out the reaction L-seryl-[protein] + UTP = O-(5'-uridylyl)-L-seryl-[protein] + diphosphate. The enzyme catalyses L-tyrosyl-[protein] + UTP = O-(5'-uridylyl)-L-tyrosyl-[protein] + diphosphate. In terms of biological role, nucleotidyltransferase involved in the post-translational modification of proteins. It can catalyze the addition of adenosine monophosphate (AMP) or uridine monophosphate (UMP) to a protein, resulting in modifications known as AMPylation and UMPylation. This is Protein nucleotidyltransferase YdiU from Bacillus mycoides (strain KBAB4) (Bacillus weihenstephanensis).